An 80-amino-acid chain; its full sequence is U19-lycotoxin-Ls1b (80 aa).

The signal sequence occupies residues 1 to 22 (MSPKVQALIFIVGLITLLAAHA). A propeptide spanning residues 23–34 (QEELSDNIESER) is cleaved from the precursor. 4 cysteine pairs are disulfide-bonded: Cys-36–Cys-50, Cys-43–Cys-55, Cys-49–Cys-66, and Cys-57–Cys-64.

The protein belongs to the neurotoxin 02 (plectoxin) family. 05 (U19-lycotoxin) subfamily. In terms of tissue distribution, expressed by the venom gland.

The protein resides in the secreted. In Lycosa singoriensis (Wolf spider), this protein is U19-lycotoxin-Ls1b.